A 481-amino-acid chain; its full sequence is Rhamnogalacturonan I rhamnosyltransferase 4 (481 aa).

A helical; Signal-anchor for type II membrane protein transmembrane segment spans residues 33 to 55 (VWFFRVCSCILVWTCLIQLFWHS). N85 and N118 each carry an N-linked (GlcNAc...) asparagine glycan. 258 to 260 (HLR) is a substrate binding site. N372 and N432 each carry an N-linked (GlcNAc...) asparagine glycan.

The protein belongs to the glycosyltransferase GT106 family.

The protein resides in the golgi apparatus membrane. The enzyme catalyses alpha-D-galacturonosyl-[(1-&gt;2)-alpha-L-rhamnosyl-(1-&gt;4)-alpha-D-galacturonosyl](n) + UDP-beta-L-rhamnose = [(1-&gt;2)-alpha-L-rhamnosyl-(1-&gt;4)-alpha-D-galacturonosyl](n+1) + UDP + H(+). It participates in glycan metabolism; pectin biosynthesis. In terms of biological role, glycosyltransferase involved in the formation of rhamnogalacturonan I (RG-I) oligosaccharides in the seed coat mucilage, which is a specialized cell wall with abundant RG-I. Transfers the rhamnose residue from UDP-beta-L-rhamnose to RG-I oligosaccharides. The polypeptide is Rhamnogalacturonan I rhamnosyltransferase 4 (Arabidopsis thaliana (Mouse-ear cress)).